Consider the following 201-residue polypeptide: Regulator of G-protein signaling 16 (201 aa).

2 S-palmitoyl cysteine lipidation sites follow: Cys2 and Cys12. The region spanning 64 to 180 (SFDLLLNSKN…LKSPAYRDLA (117 aa)) is the RGS domain. Tyr167 is modified (phosphotyrosine; by EGFR). Tyr176 is modified (phosphotyrosine). Residues 181 to 201 (AQASATSTSAPSGSPAEPSHT) are disordered.

As to quaternary structure, interacts with GNAI1 and GNAQ. Interacts with GNAI3, GNAI3 and GNAO1. In terms of processing, palmitoylated on Cys-2 and/or Cys-12. Post-translationally, phosphorylated. Phosphorylation at Tyr-167 by EGFR enhances GTPase accelerating (GAP) activity toward GNAI1. In terms of tissue distribution, retinal; also predominantly expressed in the liver and pituitary.

The protein resides in the membrane. Regulates G protein-coupled receptor signaling cascades. Inhibits signal transduction by increasing the GTPase activity of G protein alpha subunits, thereby driving them into their inactive GDP-bound form. Plays an important role in the phototransduction cascade by regulating the lifetime and effective concentration of activated transducin alpha. May regulate extra and intracellular mitogenic signals. The polypeptide is Regulator of G-protein signaling 16 (Rgs16) (Mus musculus (Mouse)).